The primary structure comprises 116 residues: SPbeta prophage-derived uncharacterized protein YoqA (116 aa).

The sequence is that of SPbeta prophage-derived uncharacterized protein YoqA (yoqA) from Bacillus subtilis (strain 168).